The sequence spans 105 residues: Pyrimidine/purine nucleoside phosphorylase (105 aa).

It belongs to the nucleoside phosphorylase PpnP family.

It carries out the reaction a purine D-ribonucleoside + phosphate = a purine nucleobase + alpha-D-ribose 1-phosphate. The enzyme catalyses adenosine + phosphate = alpha-D-ribose 1-phosphate + adenine. The catalysed reaction is cytidine + phosphate = cytosine + alpha-D-ribose 1-phosphate. It catalyses the reaction guanosine + phosphate = alpha-D-ribose 1-phosphate + guanine. It carries out the reaction inosine + phosphate = alpha-D-ribose 1-phosphate + hypoxanthine. The enzyme catalyses thymidine + phosphate = 2-deoxy-alpha-D-ribose 1-phosphate + thymine. The catalysed reaction is uridine + phosphate = alpha-D-ribose 1-phosphate + uracil. It catalyses the reaction xanthosine + phosphate = alpha-D-ribose 1-phosphate + xanthine. Catalyzes the phosphorolysis of diverse nucleosides, yielding D-ribose 1-phosphate and the respective free bases. Can use uridine, adenosine, guanosine, cytidine, thymidine, inosine and xanthosine as substrates. Also catalyzes the reverse reactions. This Wolinella succinogenes (strain ATCC 29543 / DSM 1740 / CCUG 13145 / JCM 31913 / LMG 7466 / NCTC 11488 / FDC 602W) (Vibrio succinogenes) protein is Pyrimidine/purine nucleoside phosphorylase.